A 366-amino-acid polypeptide reads, in one-letter code: GTP cyclohydrolase 1 type 2 homolog (366 aa).

Residues His64, His65, Asp102, His326, and Glu329 each coordinate Zn(2+).

This sequence belongs to the GTP cyclohydrolase I type 2/NIF3 family. Homohexamer.

This Staphylococcus aureus (strain COL) protein is GTP cyclohydrolase 1 type 2 homolog.